The chain runs to 41 residues: Large ribosomal subunit protein bL36 (41 aa).

Belongs to the bacterial ribosomal protein bL36 family.

The protein is Large ribosomal subunit protein bL36 of Rhodopseudomonas palustris (strain HaA2).